A 325-amino-acid polypeptide reads, in one-letter code: MNKFKNIAVYGGGSFGTSLASLAAQNCNNVTLFLRDEAIAKEILHNKTNVKYLGDIKLPAHLQATTNLDIIKDFELIIIALPSYAFDDSIKLLKTHSISKDNTLLIATKGFARNPTALFSDRLKTLLPYNPTAFFVGPNLAKELAKNLPASASIASLDIDIANKIAYNLSSKIFTTNVSSDIVTLQVAGALKNIFAIKSGIDLARKQGENARATLIVAALKEIAILSKALGGMQKNSDILLEGVVGDLVLTCYSLGSRNTKFGYELGISSDKQKFLQEYKELVEGREALKLVLDLIKKYNLHMPIISEVASCVIPYVMPAFAGMT.

The NADPH site is built by Ser-14, Phe-15, Arg-35, and Lys-109. Sn-glycerol 3-phosphate-binding residues include Lys-109 and Gly-137. Ala-141 contributes to the NADPH binding site. Lys-192, Asp-247, Ser-257, Arg-258, and Asn-259 together coordinate sn-glycerol 3-phosphate. Catalysis depends on Lys-192, which acts as the Proton acceptor. Residue Arg-258 coordinates NADPH. Positions 282 and 284 each coordinate NADPH.

The protein belongs to the NAD-dependent glycerol-3-phosphate dehydrogenase family.

It is found in the cytoplasm. The enzyme catalyses sn-glycerol 3-phosphate + NAD(+) = dihydroxyacetone phosphate + NADH + H(+). It catalyses the reaction sn-glycerol 3-phosphate + NADP(+) = dihydroxyacetone phosphate + NADPH + H(+). It functions in the pathway membrane lipid metabolism; glycerophospholipid metabolism. Its function is as follows. Catalyzes the reduction of the glycolytic intermediate dihydroxyacetone phosphate (DHAP) to sn-glycerol 3-phosphate (G3P), the key precursor for phospholipid synthesis. In Rickettsia africae (strain ESF-5), this protein is Glycerol-3-phosphate dehydrogenase [NAD(P)+].